The chain runs to 395 residues: Chalcone synthase (395 aa).

An N-acetylvaline modification is found at Val-2. Val-2 carries the post-translational modification N-acetylalanine. The active site involves Cys-169.

Belongs to the thiolase-like superfamily. Chalcone/stilbene synthases family.

The enzyme catalyses (E)-4-coumaroyl-CoA + 3 malonyl-CoA + 3 H(+) = 2',4,4',6'-tetrahydroxychalcone + 3 CO2 + 4 CoA. It functions in the pathway secondary metabolite biosynthesis; flavonoid biosynthesis. Functionally, the primary product of this enzyme is 4,2',4',6'-tetrahydroxychalcone (also termed naringenin-chalcone or chalcone) which can under specific conditions spontaneously isomerize into naringenin. This Arabidopsis thaliana (Mouse-ear cress) protein is Chalcone synthase (CHS).